We begin with the raw amino-acid sequence, 137 residues long: Drosulfakinins (137 aa).

The first 31 residues, 1–31, serve as a signal peptide directing secretion; that stretch reads MGLRSCTHFATLVIPLWALAFCFLVVVPVPA. Residues 32–74 constitute a propeptide that is removed on maturation; sequence QTNLQTSKGDRRLQDLESNMGAESDQPNANLVRPSLSRFGDKR. Phe-81 carries the post-translational modification Phenylalanine amide. The propeptide occupies 85 to 107; the sequence is VPRPMIPIELDLLMDNDDENTKA. Position 113 is a sulfotyrosine (Tyr-113). Phe-118 is modified (phenylalanine amide). Tyr-130 is modified (sulfotyrosine). The residue at position 135 (Phe-135) is a Phenylalanine amide.

It belongs to the gastrin/cholecystokinin family.

It localises to the secreted. In terms of biological role, drosulfakinin-0 (DSK 0) plays diverse biological roles including regulating gut muscle contraction in adults but not in larvae. The sequence is that of Drosulfakinins from Drosophila yakuba (Fruit fly).